Consider the following 595-residue polypeptide: Apolipoprotein N-acyltransferase 2 (595 aa).

A run of 5 helical transmembrane segments spans residues Phe30–Phe50, Leu63–Ile83, Val95–Phe115, Ala167–Phe187, and Phe210–Lys230. In terms of domain architecture, CN hydrolase spans Leu241–Val555. The active-site Proton acceptor is Glu293. Lys372 is a catalytic residue. The active-site Nucleophile is the Cys463. The chain crosses the membrane as a helical span at residues Leu569–Ile589.

It belongs to the CN hydrolase family. Apolipoprotein N-acyltransferase subfamily.

It localises to the cell inner membrane. It carries out the reaction N-terminal S-1,2-diacyl-sn-glyceryl-L-cysteinyl-[lipoprotein] + a glycerophospholipid = N-acyl-S-1,2-diacyl-sn-glyceryl-L-cysteinyl-[lipoprotein] + a 2-acyl-sn-glycero-3-phospholipid + H(+). The protein operates within protein modification; lipoprotein biosynthesis (N-acyl transfer). Its function is as follows. Catalyzes the phospholipid dependent N-acylation of the N-terminal cysteine of apolipoprotein, the last step in lipoprotein maturation. This is Apolipoprotein N-acyltransferase 2 from Leptospira interrogans serogroup Icterohaemorrhagiae serovar Lai (strain 56601).